Reading from the N-terminus, the 590-residue chain is Aspartate--tRNA(Asp/Asn) ligase (590 aa).

Residue Glu-175 coordinates L-aspartate. The segment at 199-202 is aspartate; that stretch reads QQYK. Residues Arg-221 and His-450 each coordinate L-aspartate. Position 221 to 223 (221 to 223) interacts with ATP; it reads RDE. Glu-484 contributes to the ATP binding site. Residue Arg-491 participates in L-aspartate binding. ATP is bound at residue 536–539; the sequence is GVDR.

This sequence belongs to the class-II aminoacyl-tRNA synthetase family. Type 1 subfamily. In terms of assembly, homodimer.

Its subcellular location is the cytoplasm. The catalysed reaction is tRNA(Asx) + L-aspartate + ATP = L-aspartyl-tRNA(Asx) + AMP + diphosphate. In terms of biological role, aspartyl-tRNA synthetase with relaxed tRNA specificity since it is able to aspartylate not only its cognate tRNA(Asp) but also tRNA(Asn). Reaction proceeds in two steps: L-aspartate is first activated by ATP to form Asp-AMP and then transferred to the acceptor end of tRNA(Asp/Asn). This is Aspartate--tRNA(Asp/Asn) ligase from Bradyrhizobium diazoefficiens (strain JCM 10833 / BCRC 13528 / IAM 13628 / NBRC 14792 / USDA 110).